Consider the following 134-residue polypeptide: Fluoride-specific ion channel FluC 2 (134 aa).

A run of 4 helical transmembrane segments spans residues 1-21 (MNYF…EITG), 28-48 (IFPV…LFFM), 68-88 (GFLG…LLLF), and 92-112 (LLIG…SGIL). Na(+) is bound by residues glycine 71 and threonine 74.

It belongs to the fluoride channel Fluc/FEX (TC 1.A.43) family.

It localises to the cell membrane. The enzyme catalyses fluoride(in) = fluoride(out). Na(+) is not transported, but it plays an essential structural role and its presence is essential for fluoride channel function. Fluoride-specific ion channel. Important for reducing fluoride concentration in the cell, thus reducing its toxicity. The polypeptide is Fluoride-specific ion channel FluC 2 (Carboxydothermus hydrogenoformans (strain ATCC BAA-161 / DSM 6008 / Z-2901)).